Consider the following 412-residue polypeptide: Gamma-glutamyl phosphate reductase (412 aa).

It belongs to the gamma-glutamyl phosphate reductase family.

It is found in the cytoplasm. It carries out the reaction L-glutamate 5-semialdehyde + phosphate + NADP(+) = L-glutamyl 5-phosphate + NADPH + H(+). It functions in the pathway amino-acid biosynthesis; L-proline biosynthesis; L-glutamate 5-semialdehyde from L-glutamate: step 2/2. Its function is as follows. Catalyzes the NADPH-dependent reduction of L-glutamate 5-phosphate into L-glutamate 5-semialdehyde and phosphate. The product spontaneously undergoes cyclization to form 1-pyrroline-5-carboxylate. The chain is Gamma-glutamyl phosphate reductase from Actinobacillus pleuropneumoniae serotype 5b (strain L20).